The primary structure comprises 394 residues: UPF0284 protein SYNW1869 (394 aa).

Belongs to the UPF0284 family.

This is UPF0284 protein SYNW1869 from Parasynechococcus marenigrum (strain WH8102).